Reading from the N-terminus, the 700-residue chain is Elongation factor G (700 aa).

One can recognise a tr-type G domain in the interval threonine 10–leucine 286. Residues alanine 19–threonine 26, aspartate 83–histidine 87, and asparagine 137–aspartate 140 contribute to the GTP site.

It belongs to the TRAFAC class translation factor GTPase superfamily. Classic translation factor GTPase family. EF-G/EF-2 subfamily.

The protein resides in the cytoplasm. Its function is as follows. Catalyzes the GTP-dependent ribosomal translocation step during translation elongation. During this step, the ribosome changes from the pre-translocational (PRE) to the post-translocational (POST) state as the newly formed A-site-bound peptidyl-tRNA and P-site-bound deacylated tRNA move to the P and E sites, respectively. Catalyzes the coordinated movement of the two tRNA molecules, the mRNA and conformational changes in the ribosome. The polypeptide is Elongation factor G (Mycolicibacterium vanbaalenii (strain DSM 7251 / JCM 13017 / BCRC 16820 / KCTC 9966 / NRRL B-24157 / PYR-1) (Mycobacterium vanbaalenii)).